We begin with the raw amino-acid sequence, 3166 residues long: Intermembrane lipid transfer protein VPS13A (3166 aa).

In terms of domain architecture, Chorein N-terminal spans phenylalanine 3 to lysine 116. TPR repeat units lie at residues leucine 212–valine 245 and leucine 373–glutamate 406. Residue threonine 831 is modified to Phosphothreonine. The residue at position 835 (serine 835) is a Phosphoserine. The FFAT motif lies at glutamate 838–cysteine 844. The segment covering alanine 1343 to threonine 1359 has biased composition (polar residues). Positions alanine 1343 to serine 1365 are disordered. Serine 1410 bears the Phosphoserine mark. TPR repeat units lie at residues alanine 1806–lysine 1840 and isoleucine 1999–aspartate 2034. In terms of domain architecture, SHR-BD spans valine 2202–glycine 2447. Required for mitochondrial localization regions lie at residues leucine 2607–leucine 3166 and glutamate 2743–leucine 3166. TPR repeat units lie at residues alanine 2716 to valine 2750 and isoleucine 2852 to phenylalanine 2890. A required for lipid droplet localization region spans residues proline 2945 to alanine 3019.

This sequence belongs to the VPS13 family. Interacts (via FFAT motif) with VAPA and VAPB. Interacts with RAB7A. Interacts with XK.

The protein resides in the mitochondrion outer membrane. It localises to the endoplasmic reticulum membrane. Its subcellular location is the endosome membrane. It is found in the lysosome membrane. The protein localises to the lipid droplet. The protein resides in the golgi apparatus. It localises to the cytoplasmic vesicle. Its subcellular location is the secretory vesicle. It is found in the neuronal dense core vesicle. Functionally, mediates the transfer of lipids between membranes at organelle contact sites. Required for the formation or stabilization of ER-mitochondria contact sites which enable transfer of lipids between the ER and mitochondria. Negatively regulates lipid droplet size and motility. Required for efficient lysosomal protein degradation. This chain is Intermembrane lipid transfer protein VPS13A, found in Mus musculus (Mouse).